Here is a 578-residue protein sequence, read N- to C-terminus: Kelch-like protein 30 (578 aa).

The BTB domain maps to 33–100; sequence ADVTLLVGGR…VYTGRLTITQ (68 aa). The BACK domain maps to 153-255; the sequence is KAWAFLRENF…EACRAALSQG (103 aa). Kelch repeat units follow at residues 270–326, 327–377, 378–422, 424–471, 473–513, and 514–563; these read VLVV…ALNN, NIYV…ALNG, EIYV…GCRG, LYLV…ALHG, LYLI…PLGD, and ALYV…TVFL.

This is Kelch-like protein 30 (KLHL30) from Homo sapiens (Human).